The sequence spans 132 residues: Small ribosomal subunit protein uS8 (132 aa).

The protein belongs to the universal ribosomal protein uS8 family. In terms of assembly, part of the 30S ribosomal subunit. Contacts proteins S5 and S12.

Its function is as follows. One of the primary rRNA binding proteins, it binds directly to 16S rRNA central domain where it helps coordinate assembly of the platform of the 30S subunit. The sequence is that of Small ribosomal subunit protein uS8 from Limosilactobacillus reuteri (strain DSM 20016) (Lactobacillus reuteri).